A 267-amino-acid polypeptide reads, in one-letter code: LexA repressor (267 aa).

Residues 1-44 (MSIDESSDNPTPRPKLGRPPKSEADKRAEKEAQKDGKKPALSTR) form a disordered region. The segment covering 20 to 38 (PKSEADKRAEKEAQKDGKK) has biased composition (basic and acidic residues). The H-T-H motif DNA-binding region spans 65 to 85 (IREIADAVGLHSTSSVSYHLT). Positions 111 to 140 (GQLTNESTKKNAGSPQPTSAAIPEPTTEGE) are disordered. Residues 112–129 (QLTNESTKKNAGSPQPTS) are compositionally biased toward polar residues. Residues S191 and K228 each act as for autocatalytic cleavage activity in the active site.

It belongs to the peptidase S24 family. In terms of assembly, homodimer.

It carries out the reaction Hydrolysis of Ala-|-Gly bond in repressor LexA.. Represses a number of genes involved in the response to DNA damage (SOS response), including recA and lexA. In the presence of single-stranded DNA, RecA interacts with LexA causing an autocatalytic cleavage which disrupts the DNA-binding part of LexA, leading to derepression of the SOS regulon and eventually DNA repair. The chain is LexA repressor from Corynebacterium jeikeium (strain K411).